The sequence spans 453 residues: Aspartic proteinase PCS1 (453 aa).

The signal sequence occupies residues 1-18; sequence MFSRFHALFLLLVLSVRT. Residues 19 to 57 constitute a propeptide, activation peptide; that stretch reads YKCVSSSSSSSSSFSFSSFSSSSSSQTLVLPLKTRITPT. Asparagine 70 and asparagine 85 each carry an N-linked (GlcNAc...) asparagine glycan. The region spanning 73 to 438 is the Peptidase A1 domain; that stretch reads LTVTLTVGTP…DLQRSRIGLA (366 aa). Residue aspartate 91 is part of the active site. N-linked (GlcNAc...) asparagine glycans are attached at residues asparagine 102, asparagine 175, asparagine 178, and asparagine 243. The active site involves aspartate 304. N-linked (GlcNAc...) asparagine glycans are attached at residues asparagine 326 and asparagine 395.

Belongs to the peptidase A1 family. As to expression, expressed specifically in developing gametophytes and developing seeds.

It is found in the endoplasmic reticulum. Its function is as follows. Embryo-specific aspartic protease that limits programmed cell death during reproductive development. Possesses peptidase activity toward casein in vitro. This is Aspartic proteinase PCS1 (PCS1) from Arabidopsis thaliana (Mouse-ear cress).